A 296-amino-acid chain; its full sequence is Calponin-2 (296 aa).

Ser2 carries the post-translational modification N-acetylserine. N6-acetyllysine occurs at positions 8 and 25. The Calponin-homology (CH) domain occupies 28 to 132 (PQKEAELRSW…SLLALAGKAK (105 aa)). Ser138 bears the Phosphoserine mark. 3 Calponin-like repeats span residues 166–191 (IGLQ…RHLY), 206–231 (ISLQ…RHIY), and 245–269 (MSLQ…RQIY). The tract at residues 275 to 296 (PQGPAADGAPAAAGDCPGPGES) is disordered.

Belongs to the calponin family. In terms of tissue distribution, smooth muscle, and tissues containing significant amounts of smooth muscle.

Its function is as follows. Thin filament-associated protein that is implicated in the regulation and modulation of smooth muscle contraction. It is capable of binding to actin, calmodulin and tropomyosin. The interaction of calponin with actin inhibits the actomyosin Mg-ATPase activity. This Sus scrofa (Pig) protein is Calponin-2 (CNN2).